We begin with the raw amino-acid sequence, 396 residues long: L-lactate dehydrogenase (396 aa).

The FMN hydroxy acid dehydrogenase domain occupies 1-380 (MIISAASDYR…SGDSLVQELG (380 aa)). A substrate-binding site is contributed by Tyr-24. Positions 106 and 127 each coordinate FMN. Tyr-129 serves as a coordination point for substrate. Residue Thr-155 participates in FMN binding. Arg-164 provides a ligand contact to substrate. Lys-251 contacts FMN. The active-site Proton acceptor is His-275. Arg-278 is a substrate binding site. Position 306–330 (306–330 (DSGIRNGLDVVRMIALGADTVLLGR)) interacts with FMN.

This sequence belongs to the FMN-dependent alpha-hydroxy acid dehydrogenase family. FMN serves as cofactor.

Its subcellular location is the cell inner membrane. The enzyme catalyses (S)-lactate + A = pyruvate + AH2. Catalyzes the conversion of L-lactate to pyruvate. Is coupled to the respiratory chain. This Salmonella paratyphi C (strain RKS4594) protein is L-lactate dehydrogenase.